The following is a 522-amino-acid chain: MSNRVIIFDTTLRDGEQALAASLTVKEKLQIALALERLGVDVMEVGFPVSSPGDFKSVQTIAKTIKNSRVCALSRALEKDIDAAAQALSVADQFRIHTFISTSTIHVESKLKRSFDDVLEMAVNAVKYARRFTDDVEFSCEDAGRTPIDNLCRMVEEAIKAGARTINIPDTVGYTVPSEFGGIIQTLFNRVPNIDQAVISVHCHDDLGLSVANSIAAVEMGARQVECTINGIGERAGNCSLEEIAMILATRKGLLDLDCGINAKEIHRTSSLVSQLCNMPIQANKAIVGTNAFSHSSGIHQDGMLKAKNTYEIMTPESIGLNRNNLNMTSRSGRHVIKHRMEEMGYKPTDYDMDSLYEQFLTLADKKGQVFDYDLEALVFMESQAQDDDKYQLQHMMVHSDSTEGVATATVRIAVDGKDITEAATGNGPVDAAYNAIARATDRKINITNYKLSAKGEGQNALGQVDITAKYNEQMFHGVGLATDVVEASAQALVHVMNLVYRADKVADFKQQIHKERELGGV.

Positions 5-267 constitute a Pyruvate carboxyltransferase domain; sequence VIIFDTTLRD…DCGINAKEIH (263 aa). The Mn(2+) site is built by Asp-14, His-202, His-204, and Asn-238. The tract at residues 392–522 is regulatory domain; that stretch reads QLQHMMVHSD…IHKERELGGV (131 aa).

The protein belongs to the alpha-IPM synthase/homocitrate synthase family. LeuA type 1 subfamily. Homodimer. Mn(2+) serves as cofactor.

It localises to the cytoplasm. The enzyme catalyses 3-methyl-2-oxobutanoate + acetyl-CoA + H2O = (2S)-2-isopropylmalate + CoA + H(+). Its pathway is amino-acid biosynthesis; L-leucine biosynthesis; L-leucine from 3-methyl-2-oxobutanoate: step 1/4. Catalyzes the condensation of the acetyl group of acetyl-CoA with 3-methyl-2-oxobutanoate (2-ketoisovalerate) to form 3-carboxy-3-hydroxy-4-methylpentanoate (2-isopropylmalate). This chain is 2-isopropylmalate synthase, found in Shewanella frigidimarina (strain NCIMB 400).